A 453-amino-acid chain; its full sequence is Allantoinase (453 aa).

Zn(2+) contacts are provided by His59, His61, Lys146, His186, His242, and Asp315. Lys146 carries the post-translational modification N6-carboxylysine.

This sequence belongs to the metallo-dependent hydrolases superfamily. Allantoinase family. Homotetramer. It depends on Zn(2+) as a cofactor. In terms of processing, carboxylation allows a single lysine to coordinate two zinc ions.

The catalysed reaction is (S)-allantoin + H2O = allantoate + H(+). It functions in the pathway nitrogen metabolism; (S)-allantoin degradation; allantoate from (S)-allantoin: step 1/1. Catalyzes the conversion of allantoin (5-ureidohydantoin) to allantoic acid by hydrolytic cleavage of the five-member hydantoin ring. The protein is Allantoinase of Escherichia coli O139:H28 (strain E24377A / ETEC).